A 542-amino-acid polypeptide reads, in one-letter code: Putative ankyrin repeat protein FPV115 (542 aa).

ANK repeat units follow at residues 33–62 (FRNL…DPNS), 157–186 (DGLL…KTNL), 218–247 (NDIN…DINT), 251–281 (KGKT…DINV), 285–314 (EGLT…DVKV), 316–345 (TTST…EFIT), 347–375 (DYLS…DVNS), and 378–407 (CIST…NINA).

The protein is Putative ankyrin repeat protein FPV115 of Fowlpox virus (strain NVSL) (FPV).